We begin with the raw amino-acid sequence, 20 residues long: Agglutinin beta-2 chain isoform 1 (20 aa).

A compositionally biased stretch (polar residues) spans 1–10 (TQSTGTSQTI). Residues 1 to 20 (TQSTGTSQTIAVGLWGGPDN) are disordered.

This sequence belongs to the jacalin lectin family. In terms of assembly, tetramer of four alpha chains associated with two or four beta chains.

Its function is as follows. Alpha-methyl-D-mannoside and D-mannose specific lectin. Binds IgA. This is Agglutinin beta-2 chain isoform 1 from Morus nigra (Black mulberry).